The chain runs to 327 residues: tRNA uridine(34) hydroxylase (327 aa).

Residues 130–224 enclose the Rhodanese domain; sequence LDEDTVVLDT…YGKDPEVRGE (95 aa). The Cysteine persulfide intermediate role is filled by Cys-184.

It belongs to the TrhO family.

The catalysed reaction is uridine(34) in tRNA + AH2 + O2 = 5-hydroxyuridine(34) in tRNA + A + H2O. Functionally, catalyzes oxygen-dependent 5-hydroxyuridine (ho5U) modification at position 34 in tRNAs. The polypeptide is tRNA uridine(34) hydroxylase (Streptococcus suis (strain 98HAH33)).